Here is a 349-residue protein sequence, read N- to C-terminus: Homeobox-leucine zipper protein HOX7 (349 aa).

The tract at residues 42–186 (RATRRDEQDD…PKQKSDLANR (145 aa)) is disordered. Polar residues-rich tracts occupy residues 89-99 (SAETGSANSEM) and 121-135 (SSPSSMQEASTRQQV). The segment at residues 150–209 (GARKKLRLSKEQSSFLEDSFKEHSTLTPKQKSDLANRLNLRPRQVEVWFQNRRARTKLKQ) is a DNA-binding region (homeobox). Positions 167–183 (DSFKEHSTLTPKQKSDL) are enriched in basic and acidic residues. The tract at residues 208-252 (KQTEVDCEHLKRCCERLTRENRRLQREVAELRGALRTTTSSYPPL) is leucine-zipper.

The protein belongs to the HD-ZIP homeobox family. Class II subfamily. In terms of assembly, homodimer. May form a heterodimer with HOX1, HOX2 or HOX3. As to expression, expressed in seedlings, roots, leaves, nodes, internodes, flowers and embryo.

It is found in the nucleus. Functionally, probable transcription factor that binds to the DNA sequence 5'-CAAT[GC]ATTG-3'. The chain is Homeobox-leucine zipper protein HOX7 (HOX7) from Oryza sativa subsp. indica (Rice).